We begin with the raw amino-acid sequence, 183 residues long: NADH-quinone oxidoreductase subunit A (183 aa).

3 helical membrane-spanning segments follow: residues 11–31 (IIAF…VPLL), 63–83 (FYLV…LYAW), and 98–118 (VVIF…VGAL). The segment at 159-183 (TGQIPAQSSGRVKSKTTPALSSEKE) is disordered.

Belongs to the complex I subunit 3 family. As to quaternary structure, NDH-1 is composed of 14 different subunits. Subunits NuoA, H, J, K, L, M, N constitute the membrane sector of the complex.

The protein localises to the cell inner membrane. It catalyses the reaction a quinone + NADH + 5 H(+)(in) = a quinol + NAD(+) + 4 H(+)(out). NDH-1 shuttles electrons from NADH, via FMN and iron-sulfur (Fe-S) centers, to quinones in the respiratory chain. The immediate electron acceptor for the enzyme in this species is believed to be ubiquinone. Couples the redox reaction to proton translocation (for every two electrons transferred, four hydrogen ions are translocated across the cytoplasmic membrane), and thus conserves the redox energy in a proton gradient. This chain is NADH-quinone oxidoreductase subunit A, found in Acinetobacter baumannii (strain AYE).